A 211-amino-acid polypeptide reads, in one-letter code: Imidazole glycerol phosphate synthase subunit HisH (211 aa).

One can recognise a Glutamine amidotransferase type-1 domain in the interval 1 to 211 (MIGIIDYGMG…VGIATGRGNG (211 aa)). Cys-79 functions as the Nucleophile in the catalytic mechanism. Catalysis depends on residues His-186 and Glu-188.

In terms of assembly, heterodimer of HisH and HisF.

The protein localises to the cytoplasm. It catalyses the reaction 5-[(5-phospho-1-deoxy-D-ribulos-1-ylimino)methylamino]-1-(5-phospho-beta-D-ribosyl)imidazole-4-carboxamide + L-glutamine = D-erythro-1-(imidazol-4-yl)glycerol 3-phosphate + 5-amino-1-(5-phospho-beta-D-ribosyl)imidazole-4-carboxamide + L-glutamate + H(+). The enzyme catalyses L-glutamine + H2O = L-glutamate + NH4(+). It participates in amino-acid biosynthesis; L-histidine biosynthesis; L-histidine from 5-phospho-alpha-D-ribose 1-diphosphate: step 5/9. In terms of biological role, IGPS catalyzes the conversion of PRFAR and glutamine to IGP, AICAR and glutamate. The HisH subunit catalyzes the hydrolysis of glutamine to glutamate and ammonia as part of the synthesis of IGP and AICAR. The resulting ammonia molecule is channeled to the active site of HisF. This is Imidazole glycerol phosphate synthase subunit HisH from Geobacillus kaustophilus (strain HTA426).